The primary structure comprises 635 residues: Ligand-gated ion channel 4 (635 aa).

The first 24 residues, 1-24 (MIICYSCLTVSILLTIKFVPCRFA), serve as a signal peptide directing secretion. Over 25–324 (GIEHQNTKSR…IHMHRRPLFY (300 aa)) the chain is Extracellular. N-linked (GlcNAc...) asparagine glycosylation is found at asparagine 46, asparagine 139, asparagine 177, and asparagine 225. A disulfide bond links cysteine 238 and cysteine 252. N-linked (GlcNAc...) asparagine glycosylation is present at asparagine 282. 3 helical membrane-spanning segments follow: residues 325–345 (VFNH…GFLM), 355–375 (MIIT…ESIP), and 381–401 (VPLI…ATCV). The Cytoplasmic portion of the chain corresponds to 402 to 599 (NVITLNMHRN…QQLASVVDRL (198 aa)). The helical transmembrane segment at 600 to 620 (LLCLFCTATLFTIICLLIVPV) threads the bilayer. Residue asparagine 625 is glycosylated (N-linked (GlcNAc...) asparagine).

This sequence belongs to the ligand-gated ion channel (TC 1.A.9) family.

The protein resides in the postsynaptic cell membrane. It is found in the cell membrane. Its function is as follows. Possible acetylcholine receptor. The polypeptide is Ligand-gated ion channel 4 (lgc-4) (Caenorhabditis elegans).